The primary structure comprises 323 residues: tRNA U34 carboxymethyltransferase (323 aa).

Carboxy-S-adenosyl-L-methionine-binding positions include Lys91, Trp105, Lys110, Gly130, 152–154 (DPT), 181–182 (IE), Met196, Tyr200, and Arg315.

It belongs to the class I-like SAM-binding methyltransferase superfamily. CmoB family. In terms of assembly, homotetramer.

The catalysed reaction is carboxy-S-adenosyl-L-methionine + 5-hydroxyuridine(34) in tRNA = 5-carboxymethoxyuridine(34) in tRNA + S-adenosyl-L-homocysteine + H(+). Catalyzes carboxymethyl transfer from carboxy-S-adenosyl-L-methionine (Cx-SAM) to 5-hydroxyuridine (ho5U) to form 5-carboxymethoxyuridine (cmo5U) at position 34 in tRNAs. The chain is tRNA U34 carboxymethyltransferase from Escherichia coli O8 (strain IAI1).